Here is a 279-residue protein sequence, read N- to C-terminus: MAFQGTSRTLTQQSSAASSDDLQKILFSPDAIKKMATECDLGRHHWMRADNAISVRPLVPQVTSNNLLSFFKSGYDAGELRSKGYMSVPQVLCAVTRTVSTDAEGSLKIYLADLGDKELSPIDGQCVTLHNHELPALISFQPTYDCPMELVANRHRCFAVVVERHGYIGYGGTTASVCSNWQAQFSSKNNNYTHAAAGKTLVLPYNRLAEHSKPSAVARLLKSQLNNVSSSRYLLPNVALNQNASGHESEILNESPPIAIGSPSASRNNSFRSQVVNGL.

The span at 256–266 (PPIAIGSPSAS) shows a compositional bias: low complexity. Residues 256 to 279 (PPIAIGSPSASRNNSFRSQVVNGL) are disordered. The span at 267-279 (RNNSFRSQVVNGL) shows a compositional bias: polar residues.

The protein belongs to the cucumovirus movement protein family.

It localises to the host cell junction. The protein localises to the host plasmodesma. Functionally, transports viral genome to neighboring plant cells directly through plasmosdesmata, without any budding. The movement protein allows efficient cell to cell propagation, by bypassing the host cell wall barrier. Acts by forming a tubular structure at the host plasmodesmata, enlarging it enough to allow free passage of virion capsids. This Cucumis sativus (Cucumber) protein is Movement protein.